The following is a 122-amino-acid chain: UPF0382 membrane protein SH2409 (122 aa).

4 helical membrane-spanning segments follow: residues 3–23 (LFII…AFGA), 46–66 (MYHG…SINV), 69–89 (AGWL…ILAL), and 98–118 (ITPI…ISTF).

This sequence belongs to the UPF0382 family.

The protein localises to the cell membrane. This chain is UPF0382 membrane protein SH2409, found in Staphylococcus haemolyticus (strain JCSC1435).